The sequence spans 477 residues: Inositol phosphosphingolipids phospholipase C (477 aa).

Residues 1–398 (MYNRKDRDVH…QRQKFFRGLH (398 aa)) lie on the Cytoplasmic side of the membrane. E100 provides a ligand contact to Mg(2+). Residue H334 is the Proton acceptor of the active site. The chain crosses the membrane as a helical span at residues 399–417 (FWASILLLIASLVVTTFTA). Over 418 to 424 (NKAGWSS) the chain is Mitochondrial intermembrane. A helical membrane pass occupies residues 425–449 (IFWVLFAIAVSISGTIDGAISFLFG). The Cytoplasmic portion of the chain corresponds to 450–477 (RSEIRALIEVEQEVLDAEHHLQTFLSEK).

It belongs to the neutral sphingomyelinase family. Requires Mg(2+) as cofactor.

Its subcellular location is the endoplasmic reticulum membrane. It localises to the mitochondrion outer membrane. The catalysed reaction is an N-acyl-(4R)-4-hydroxysphinganine-1-phosphoinositol + H2O = 1D-myo-inositol 1-phosphate + an N-acyl-(4R)-4-hydroxysphinganine + H(+). It catalyses the reaction a mannosylinositol-1-phospho-N-acyl-sphingoid base + H2O = mannosylinositol-1-phosphate + an N-acyl-sphingoid base + H(+). The enzyme catalyses an inositol phosphomannosylinositol-1-phospho-N-acyl-(4R)-4-hydroxysphinganine + H2O = mannosyldiinositol-1-phosphate + an N-acyl-(4R)-4-hydroxysphinganine + H(+). Its pathway is lipid metabolism; sphingolipid metabolism. Its activity is regulated as follows. Activated through localization to mitochondria in specific growth phases. Functionally, responsible for the hydrolysis of the phosphosphingolipids (IPS), inositol phosphorylceramide (IPC), mannosylinositol phosphorylceramide (MIPC), and mannosyldiinositol phosphorylceramide (M(IP)2C). Regulates sphingolipid metabolism in mitochondria, especially the formation of alpha-hydroxylated very long chain phytoceramides. The generated ceramides contribute to the normal function of mitochondria. Also active on sphingomyelin (SM), but this activity is probably not physiologically relevant. This Saccharomyces cerevisiae (strain ATCC 204508 / S288c) (Baker's yeast) protein is Inositol phosphosphingolipids phospholipase C.